The sequence spans 236 residues: DNA repair protein RecO (236 aa).

Belongs to the RecO family.

Involved in DNA repair and RecF pathway recombination. The sequence is that of DNA repair protein RecO from Cellvibrio japonicus (strain Ueda107) (Pseudomonas fluorescens subsp. cellulosa).